Consider the following 152-residue polypeptide: MKVILLENLRRIGSIGEIIDVKRGFARNFLISNKKALYASKENIAEVEKIKSELSKKDTEKKKEAQKISEQINNKEYEIKKLSTENKELYGSVKPTEISKLILENDKLDIKPSMIQPITEIKSIGKFKVKIILHSEVDSEITINVVTADTIQ.

It belongs to the bacterial ribosomal protein bL9 family.

Its function is as follows. Binds to the 23S rRNA. The sequence is that of Large ribosomal subunit protein bL9 from Pelagibacter ubique (strain HTCC1062).